We begin with the raw amino-acid sequence, 25 residues long: Chrysophsin-1 (25 aa).

The residue at position 25 (H25) is a Histidine amide.

Gill. Localized in certain epithelial cells lining the surface of secondary lamellae and eosinophilic granule cell-like cells at the base of secondary lamellae.

It localises to the secreted. In terms of biological role, has antibacterial activity against Gram-positive bacteria B.subtilis ATCC 6633, L.garvieae ATCC 49156 and S.iniae F-8502, and Gram-negative bacteria E.coli WT-2, V.anguillarum ATCC 19264, V.penaeicida KHA, V.harveyi ATCC 14126, V.vulnificus ATCC 33148, A.salmonicida NCMB 1102 and P.putida ATCC 12633. Has hemolytic activity against human red blood cells. Seems to disrupt the membranes by adopting an alpha helical conformation. May play a significant role in innate host defense. In Pagrus major (Red sea bream), this protein is Chrysophsin-1.